Reading from the N-terminus, the 476-residue chain is NADH-quinone oxidoreductase subunit N (476 aa).

14 helical membrane-spanning segments follow: residues 4-24 (LLAL…MLTI), 32-52 (LTAT…VVAW), 67-87 (GLAV…ATLG), 100-117 (EYYL…ALVS), 121-141 (LAAL…MLAY), 155-175 (YMVL…LLYS), 198-218 (LMAG…IVPF), 230-250 (PAPA…LVLL), 263-283 (LHSL…LLAL), 291-311 (LLGY…VVND), 319-339 (ALYL…VTLL), 366-386 (AVLT…GFIG), 406-426 (VVAG…TLFL), and 447-467 (VVVL…APMI).

It belongs to the complex I subunit 2 family. As to quaternary structure, NDH-1 is composed of 14 different subunits. Subunits NuoA, H, J, K, L, M, N constitute the membrane sector of the complex.

The protein resides in the cell inner membrane. It carries out the reaction a quinone + NADH + 5 H(+)(in) = a quinol + NAD(+) + 4 H(+)(out). Functionally, NDH-1 shuttles electrons from NADH, via FMN and iron-sulfur (Fe-S) centers, to quinones in the respiratory chain. The immediate electron acceptor for the enzyme in this species is believed to be ubiquinone. Couples the redox reaction to proton translocation (for every two electrons transferred, four hydrogen ions are translocated across the cytoplasmic membrane), and thus conserves the redox energy in a proton gradient. The polypeptide is NADH-quinone oxidoreductase subunit N (Chromohalobacter salexigens (strain ATCC BAA-138 / DSM 3043 / CIP 106854 / NCIMB 13768 / 1H11)).